Here is an 83-residue protein sequence, read N- to C-terminus: Delta-conotoxin-like MVIC (83 aa).

Residues M1–A22 form the signal peptide. Positions D23–N49 are excised as a propeptide. 3 cysteine pairs are disulfide-bonded: C54/C69, C61/C73, and C68/C78. Residues P56 and P65 each carry the 4-hydroxyproline modification.

The protein belongs to the conotoxin O1 superfamily. In terms of tissue distribution, expressed by the venom duct.

Its subcellular location is the secreted. Delta-conotoxins bind to site 6 of voltage-gated sodium channels (Nav) and inhibit the inactivation process. This is Delta-conotoxin-like MVIC from Conus magus (Magical cone).